Here is a 69-residue protein sequence, read N- to C-terminus: FXYD domain-containing ion transport regulator 11 (69 aa).

A signal peptide spans 1–22; it reads MSQLTELVLLTVFLALFSRAEA. The Extracellular portion of the chain corresponds to 23–33; it reads NPFVYNYEALR. A helical membrane pass occupies residues 34 to 54; it reads IGGLVFTCVLVAGAVTALCWG. At 55-69 the chain is on the cytoplasmic side; the sequence is QCKPKRKHDDDASKI.

The protein belongs to the FXYD family. As to expression, detected in adult gill and in larval skin at 2 days post-fertilization (at protein level). In adult gill, strong expression is found in the basal regions of the secondary lamellae.

It localises to the cell membrane. Its function is as follows. May modulate the activity of a sodium/potassium-transporting ATPase. This is FXYD domain-containing ion transport regulator 11 from Danio rerio (Zebrafish).